Consider the following 317-residue polypeptide: Protein phosphatase 1 regulatory subunit 3C-B (317 aa).

In terms of domain architecture, CBM21 spans 150–258 (RNRLKKNLVC…NNDGKNYKLV (109 aa)).

Interacts with PPP1CC catalytic subunit of PP1 and associates with glycogen. Forms complexes with glycogen phosphorylase, glycogen synthase and phosphorylase kinase which is necessary for its regulation of PP1 activity.

In terms of biological role, acts as a glycogen-targeting subunit for PP1 and regulates its activity. Activates glycogen synthase, reduces glycogen phosphorylase activity and limits glycogen breakdown. The protein is Protein phosphatase 1 regulatory subunit 3C-B (ppp1r3cb) of Danio rerio (Zebrafish).